The chain runs to 590 residues: Guanylate-binding protein 1 (590 aa).

Residues 1–309 (MASEIHMTGP…NAISSGDLPC (309 aa)) form a GTPase domain (Globular) region. One can recognise a GB1/RHD3-type G domain in the interval 35–276 (TQPVVVVAIV…FCSYIFSNSK (242 aa)). GTP contacts are provided by residues 45–52 (GLYRTGKS), 67–69 (LGS), and 97–101 (DTEGL). Phosphoserine is present on serine 156. Position 587 is a cysteine methyl ester (cysteine 587). Cysteine 587 is lipidated: S-farnesyl cysteine. Threonine 588 is subject to Phosphothreonine. The propeptide at 588-590 (TIS) is removed in mature form.

This sequence belongs to the TRAFAC class dynamin-like GTPase superfamily. GB1/RHD3 GTPase family. GB1 subfamily. As to quaternary structure, homodimer; homodimerization occurs upon GTP-binding and is required for the second hydrolysis step from GDP to GMP. Undergoes conformational changes and oligomerization upon GTP-binding and hydrolysis. Heterodimer with other family members, including GBP2, GBP3, GBP4 and GBP5. Dimerization regulates subcellular location to membranous structures. Interacts with SQSTM1. Interacts (when phosphorylated) with 14-3-3 protein sigma (SFN); leading to GBP1 retention in the cytosol and inactivation. Isoprenylation is required for proper subcellular location. Post-translationally, phosphorylated at Ser-156 by PIM1 in absence of infection, inhibits GBP1: phosphorylation promotes interaction with 14-3-3 protein sigma (SFN), leading to GBP1 retention in the cytosol. Dephosphorylated in response to infection, liberating GBP1.

The protein resides in the cytoplasmic vesicle membrane. Its subcellular location is the golgi apparatus membrane. The protein localises to the cell membrane. It is found in the cytoplasm. It localises to the cytosol. The protein resides in the secreted. The enzyme catalyses GTP + H2O = GDP + phosphate + H(+). The catalysed reaction is GDP + H2O = GMP + phosphate + H(+). Functionally, interferon (IFN)-inducible GTPase that plays important roles in innate immunity against a diverse range of bacterial, viral and protozoan pathogens. Hydrolyzes GTP to GMP in two consecutive cleavage reactions: GTP is first hydrolyzed to GDP and then to GMP in a processive manner. Following infection, recruited to the pathogen-containing vacuoles or vacuole-escaped bacteria and promotes both inflammasome assembly and autophagy. Acts as a positive regulator of inflammasome assembly by facilitating the detection of inflammasome ligands from pathogens. Involved in the lysis of pathogen-containing vacuoles, releasing pathogens into the cytosol. Following pathogen release in the cytosol, forms a protein coat in a GTPase-dependent manner that encapsulates pathogens and promotes the detection of ligands by pattern recognition receptors. Plays a key role in inflammasome assembly in response to infection by Gram-negative bacteria: following pathogen release in the cytosol, forms a protein coat that encapsulates Gram-negative bacteria and directly binds to lipopolysaccharide (LPS), disrupting the O-antigen barrier and unmasking lipid A that is that detected by the non-canonical inflammasome effector CASP4/CASP11. Also promotes recruitment of proteins that mediate bacterial cytolysis, leading to release double-stranded DNA (dsDNA) that activates the AIM2 inflammasome. Involved in autophagy by regulating bacteriolytic peptide generation via its interaction with ubiquitin-binding protein SQSTM1, which delivers monoubiquitinated proteins to autolysosomes for the generation of bacteriolytic peptides. Confers protection to several pathogens, including the bacterial pathogens L.monocytogenes and M.bovis BCG as well as the protozoan pathogen T.gondii. Exhibits antiviral activity against influenza virus. The polypeptide is Guanylate-binding protein 1 (GBP1) (Chlorocebus aethiops (Green monkey)).